A 113-amino-acid polypeptide reads, in one-letter code: Photosystem II reaction center Psb28 protein (113 aa).

Belongs to the Psb28 family. Part of the photosystem II complex.

Its subcellular location is the cellular thylakoid membrane. This chain is Photosystem II reaction center Psb28 protein, found in Nostoc punctiforme (strain ATCC 29133 / PCC 73102).